We begin with the raw amino-acid sequence, 96 residues long: (4S)-4-hydroxy-5-phosphonooxypentane-2,3-dione isomerase (96 aa).

Residues 2-91 form the ABM domain; it reads HVTLVEINVH…MTGPRKKRLF (90 aa).

This sequence belongs to the LsrG family. In terms of assembly, homodimer.

It localises to the cytoplasm. The catalysed reaction is (2S)-2-hydroxy-3,4-dioxopentyl phosphate = 3-hydroxy-2,4-dioxopentyl phosphate. Functionally, involved in the degradation of phospho-AI-2, thereby terminating induction of the lsr operon and closing the AI-2 signaling cycle. Catalyzes the conversion of (4S)-4-hydroxy-5-phosphonooxypentane-2,3-dione (P-DPD) to 3-hydroxy-5-phosphonooxypentane-2,4-dione (P-HPD). This is (4S)-4-hydroxy-5-phosphonooxypentane-2,3-dione isomerase from Shigella flexneri serotype 5b (strain 8401).